Consider the following 414-residue polypeptide: eIF5-mimic protein 1 (414 aa).

Residues Met-1–Lys-22 are disordered. Residues Val-248–Ile-414 enclose the W2 domain.

This sequence belongs to the BZW family.

The protein localises to the cytoplasm. Functionally, translation initiation regulator which may repress non-AUG initiated translation and repeat-associated non-AUG (RAN) initiated translation by acting as a competitive inhibitor of eukaryotic translation initiation factor 5 (EIF5) function. In Gallus gallus (Chicken), this protein is eIF5-mimic protein 1 (BZW2).